Here is a 417-residue protein sequence, read N- to C-terminus: Hydrogen cyanide synthase subunit HcnC (417 aa).

Positions 1 to 18 are cleaved as a signal peptide; the sequence is MNRTYDIVIAGGGVIGAS. Residue 7–21 coordinates FAD; the sequence is IVIAGGGVIGASCAY. Cys-19 carries N-palmitoyl cysteine lipidation. Residue Cys-19 is the site of S-diacylglycerol cysteine attachment. A helical membrane pass occupies residues 46–66; it reads SAGGLWAIGESVGLGCGVIFF.

The protein belongs to the FAD-dependent glycerol-3-phosphate dehydrogenase family. As to quaternary structure, heterotrimer of HcnA, HcnB and HcnC. It depends on FAD as a cofactor.

The protein localises to the cell membrane. The enzyme catalyses glycine + 2 A = hydrogen cyanide + 2 AH2 + CO2. With respect to regulation, oxygen is necessary for cyanogenesis. Activated by succinate, glycine methyl ester, glucose and D,L-methionine in addition to glycine. Phenazine methosulfate, methylene blue, 2,6-dichlorophenolindophenol (DCIP) and ferricyanide can replace oxygen for the reaction. Inhibited by pyrrolnitrin and acriflavine at 1 mM concentration. A three-component membrane-bound flavoenzyme that catalyzes the formation of hydrogen cyanide, a secondary metabolite, by transfer of electrons to a cyanide-resistant branch of the aerobic respiratory chain. This Pseudomonas aeruginosa (strain ATCC 15692 / DSM 22644 / CIP 104116 / JCM 14847 / LMG 12228 / 1C / PRS 101 / PAO1) protein is Hydrogen cyanide synthase subunit HcnC.